A 130-amino-acid chain; its full sequence is Large ribosomal subunit protein bL19 (130 aa).

This sequence belongs to the bacterial ribosomal protein bL19 family.

Functionally, this protein is located at the 30S-50S ribosomal subunit interface and may play a role in the structure and function of the aminoacyl-tRNA binding site. This Methylorubrum populi (strain ATCC BAA-705 / NCIMB 13946 / BJ001) (Methylobacterium populi) protein is Large ribosomal subunit protein bL19.